The primary structure comprises 244 residues: Gas vesicle protein F (244 aa).

Residues 1 to 109 (MTVGLYLYGI…QLKELFAKLS (109 aa)) form an N-terminus region. The tract at residues 110 to 233 (GQREVSIKIF…GDRLRIRYNN (124 aa)) is C-terminus, modifed ferredoxin fold. Residues 234–244 (LTAPYTFAQLI) are C-tail.

The protein belongs to the gas vesicle GvpF/GvpL family. In terms of assembly, binds GvpA.

The protein localises to the gas vesicle. In terms of biological role, a minor component of the gas vesicle, may be involved in preventing GvpA aggregation during gas vesicle nucleation. Gas vesicles (GV) are hollow, gas filled proteinaceous nanostructures. During planktonic growth they allow positioning of the organism at a favorable depth for light or nutrient acquisition. This chain is Gas vesicle protein F, found in Microcystis aeruginosa (strain PCC 7806).